The primary structure comprises 119 residues: Putative membrane protein insertion efficiency factor (119 aa).

Belongs to the UPF0161 family.

The protein resides in the cell inner membrane. In terms of biological role, could be involved in insertion of integral membrane proteins into the membrane. The polypeptide is Putative membrane protein insertion efficiency factor (Brucella anthropi (strain ATCC 49188 / DSM 6882 / CCUG 24695 / JCM 21032 / LMG 3331 / NBRC 15819 / NCTC 12168 / Alc 37) (Ochrobactrum anthropi)).